Consider the following 392-residue polypeptide: Odorant receptor 9a (392 aa).

The Cytoplasmic segment spans residues 1-41 (MSDKVKGKKQEEKDQSLRVQILVYRCMGIDLWSPTMANDRP). Residues 42–62 (WLTFVTMGPLFLFMVPMFLAA) form a helical membrane-spanning segment. At 63–74 (HEYITQVSLLSD) the chain is on the extracellular side. The helical transmembrane segment at 75–95 (TLGSTFASMLTLVKFLLFCYH) threads the bilayer. Residues 96 to 141 (RKEFVGLIYHIRAILAKEIEVWPDAREIIEVENQSDQMLSLTYTRC) lie on the Cytoplasmic side of the membrane. The chain crosses the membrane as a helical span at residues 142–162 (FGLAGIFAALKPFVGIILSSI). Residues 163-202 (RGDEIHLELPHNGVYPYDLQVVMFYVPTYLWNVMASYSAV) lie on the Extracellular side of the membrane. A helical membrane pass occupies residues 203–223 (TMALCVDSLLFFFTYNVCAIF). At 224-268 (KIAKHRMIHLPAVGGKEELEGLVQVLLLHQKGLQIADHIADKYRP) the chain is on the cytoplasmic side. Residues 269–289 (LIFLQFFLSALQICFIGFQVA) form a helical membrane-spanning segment. The Extracellular segment spans residues 290–297 (DLFPNPQS). The chain crosses the membrane as a helical span at residues 298–318 (LYFIAFVGSLLIALFIYSKCG). Over 319-362 (ENIKSASLDFGNGLYETNWTDFSPPTKRALLIAAMRAQRPCQMK) the chain is Cytoplasmic. A helical membrane pass occupies residues 363–383 (GYFFEASMATFSTIVRSAVSY). Residues 384–392 (IMMLRSFNA) are Extracellular-facing.

The protein belongs to the insect chemoreceptor superfamily. Heteromeric odorant receptor channel (TC 1.A.69) family. Or1a subfamily. In terms of assembly, interacts with Orco. Complexes exist early in the endomembrane system in olfactory sensory neurons (OSNs), coupling these complexes to the conserved ciliary trafficking pathway. In terms of tissue distribution, expressed in olfactory sensory neurons in the antenna.

The protein resides in the cell membrane. Functionally, odorant receptor which mediates acceptance or avoidance behavior, depending on its substrates. The odorant receptor repertoire encodes a large collection of odor stimuli that vary widely in identity, intensity, and duration. May form a complex with Orco to form odorant-sensing units, providing sensitive and prolonged odorant signaling and calcium permeability. This is Odorant receptor 9a (Or9a) from Drosophila melanogaster (Fruit fly).